Here is a 108-residue protein sequence, read N- to C-terminus: Protein YcgL (108 aa).

Residues 12–96 (MFCVIYRSSK…PPEDLLKQHL (85 aa)) enclose the YcgL domain.

The chain is Protein YcgL from Escherichia coli O9:H4 (strain HS).